A 765-amino-acid polypeptide reads, in one-letter code: Protein O-mannosyl-transferase 2 (765 aa).

The disordered stretch occupies residues 1 to 31 (MAASVVKTPKCPRRGSVKDVAQNAPRTAPTS). A helical transmembrane segment spans residues 35-55 (ANWNWWLLLATVFLVTFATRF). 3 N-linked (GlcNAc...) asparagine glycosylation sites follow: Asn-80, Asn-106, and Asn-119. The next 5 membrane-spanning stretches (helical) occupy residues 128 to 148 (YFCT…VYDL), 175 to 195 (ILLD…MVKV), 206 to 226 (GLRW…TISV), 228 to 248 (FVGL…LWLI), and 268 to 288 (ITLI…HLSV). N-linked (GlcNAc...) asparagine glycans are attached at residues Asn-290 and Asn-314. MIR domains are found at residues 318 to 374 (PRDV…IRPH), 384 to 440 (VQIL…VLIV), and 445 to 501 (NETV…VEDN). Asn-445 carries an N-linked (GlcNAc...) asparagine glycan. Transmembrane regions (helical) follow at residues 566–586 (IYLL…ALFV), 667–687 (LFLG…VLYF), 689–709 (HYFP…NYIL), and 719–739 (VILG…SPLA). A glycan (N-linked (GlcNAc...) asparagine) is linked at Asn-751.

The protein belongs to the glycosyltransferase 39 family. Interacts with Rt/POMT1. At the cellular blastoderm stage, expression accumulates in the ventrally located mesoderm primordium. At germ band extension, mesoderm expression is seen as stripes of strong expression. A very strong signal is also detected in the invaginating gut. As the germ band retracts, mesodermal expression decays and becomes restricted to somatic muscle precursors.

It is found in the endoplasmic reticulum membrane. It catalyses the reaction a di-trans,poly-cis-dolichyl beta-D-mannosyl phosphate + L-seryl-[protein] = 3-O-(alpha-D-mannosyl)-L-seryl-[protein] + a di-trans,poly-cis-dolichyl phosphate + H(+). The catalysed reaction is a di-trans,poly-cis-dolichyl beta-D-mannosyl phosphate + L-threonyl-[protein] = 3-O-(alpha-D-mannosyl)-L-threonyl-[protein] + a di-trans,poly-cis-dolichyl phosphate + H(+). It participates in protein modification; protein glycosylation. In terms of biological role, rt/POMT1 and tw/POMT2 function as a protein O-mannosyltransferase in association with each other to generate and maintain normal muscle development. This is Protein O-mannosyl-transferase 2 (tw) from Drosophila melanogaster (Fruit fly).